Consider the following 445-residue polypeptide: UDP-N-acetylmuramoylalanine--D-glutamate ligase (445 aa).

Residue 126–132 (GTSGKTT) coordinates ATP.

The protein belongs to the MurCDEF family.

It is found in the cytoplasm. The catalysed reaction is UDP-N-acetyl-alpha-D-muramoyl-L-alanine + D-glutamate + ATP = UDP-N-acetyl-alpha-D-muramoyl-L-alanyl-D-glutamate + ADP + phosphate + H(+). It participates in cell wall biogenesis; peptidoglycan biosynthesis. In terms of biological role, cell wall formation. Catalyzes the addition of glutamate to the nucleotide precursor UDP-N-acetylmuramoyl-L-alanine (UMA). This chain is UDP-N-acetylmuramoylalanine--D-glutamate ligase, found in Nitratidesulfovibrio vulgaris (strain DSM 19637 / Miyazaki F) (Desulfovibrio vulgaris).